The following is a 664-amino-acid chain: Trifunctional UDP-glucose 4,6-dehydratase/UDP-4-keto-6-deoxy-D-glucose 3,5-epimerase/UDP-4-keto-L-rhamnose-reductase RHM3 (664 aa).

Position 13-19 (13-19 (GAAGFIA)) interacts with NAD(+). Thr132 serves as a coordination point for substrate. Asp133 acts as the Proton donor in catalysis. Active-site proton acceptor residues include Glu134 and Tyr159. Residue 386-392 (GKTGWLG) coordinates NADP(+).

In the N-terminal section; belongs to the NAD(P)-dependent epimerase/dehydratase family. dTDP-glucose dehydratase subfamily. This sequence in the C-terminal section; belongs to the dTDP-4-dehydrorhamnose reductase family. NAD(+) is required as a cofactor. Requires NADP(+) as cofactor. Expressed in roots, stems, seedlings, and siliques. Lower expression in inflorescence tips, and leaves.

The enzyme catalyses UDP-alpha-D-glucose = UDP-4-dehydro-6-deoxy-alpha-D-glucose + H2O. It participates in carbohydrate biosynthesis. Functionally, trifunctional enzyme involved in UDP-beta-L-rhamnose biosynthesis, a precursor of the primary cell wall components rhamnogalacturonan I (RG-I) and rhamnogalacturonan II (RG-II). Catalyzes the dehydration of UDP-glucose to form UDP-4-dehydro-6-deoxy-D-glucose followed by the epimerization of the C3' and C5' positions of UDP-4-dehydro-6-deoxy-D-glucose to form UDP-4-keto-beta-L-rhamnose and the reduction of UDP-4-keto-beta-L-rhamnose to yield UDP-beta-L-rhamnose. The sequence is that of Trifunctional UDP-glucose 4,6-dehydratase/UDP-4-keto-6-deoxy-D-glucose 3,5-epimerase/UDP-4-keto-L-rhamnose-reductase RHM3 from Arabidopsis thaliana (Mouse-ear cress).